Here is a 397-residue protein sequence, read N- to C-terminus: UPF0261 protein mlr3387 (397 aa).

The protein belongs to the UPF0261 family.

This Mesorhizobium japonicum (strain LMG 29417 / CECT 9101 / MAFF 303099) (Mesorhizobium loti (strain MAFF 303099)) protein is UPF0261 protein mlr3387.